The sequence spans 96 residues: Small ribosomal subunit protein bS6 (96 aa).

Belongs to the bacterial ribosomal protein bS6 family.

Binds together with bS18 to 16S ribosomal RNA. The sequence is that of Small ribosomal subunit protein bS6 from Streptococcus uberis (strain ATCC BAA-854 / 0140J).